A 1201-amino-acid polypeptide reads, in one-letter code: DNA-directed RNA polymerase subunit beta' (1201 aa).

Zn(2+)-binding residues include Cys60, Cys62, Cys75, and Cys78. 3 residues coordinate Mg(2+): Asp449, Asp451, and Asp453. 4 residues coordinate Zn(2+): Cys818, Cys892, Cys899, and Cys902.

The protein belongs to the RNA polymerase beta' chain family. As to quaternary structure, the RNAP catalytic core consists of 2 alpha, 1 beta, 1 beta' and 1 omega subunit. When a sigma factor is associated with the core the holoenzyme is formed, which can initiate transcription. Mg(2+) is required as a cofactor. The cofactor is Zn(2+).

It catalyses the reaction RNA(n) + a ribonucleoside 5'-triphosphate = RNA(n+1) + diphosphate. Its function is as follows. DNA-dependent RNA polymerase catalyzes the transcription of DNA into RNA using the four ribonucleoside triphosphates as substrates. This chain is DNA-directed RNA polymerase subunit beta', found in Listeria monocytogenes serovar 1/2a (strain ATCC BAA-679 / EGD-e).